The chain runs to 218 residues: dTTP/UTP pyrophosphatase (218 aa).

Residue aspartate 76 is the Proton acceptor of the active site.

It belongs to the Maf family. YhdE subfamily. A divalent metal cation serves as cofactor.

The protein resides in the cytoplasm. It catalyses the reaction dTTP + H2O = dTMP + diphosphate + H(+). It carries out the reaction UTP + H2O = UMP + diphosphate + H(+). Functionally, nucleoside triphosphate pyrophosphatase that hydrolyzes dTTP and UTP. May have a dual role in cell division arrest and in preventing the incorporation of modified nucleotides into cellular nucleic acids. The chain is dTTP/UTP pyrophosphatase from Cytophaga hutchinsonii (strain ATCC 33406 / DSM 1761 / CIP 103989 / NBRC 15051 / NCIMB 9469 / D465).